The sequence spans 434 residues: Deferrochelatase (434 aa).

The segment at residues 1–45 (MRDKTGPKFGPYQPDDEAVSPSRRRLILGMGMVSGALVLGGAKTA) is a signal peptide (tat-type signal). Heme b-binding positions include 247 to 249 (GTA), H340, 345 to 347 (NPR), and R358.

The protein belongs to the DyP-type peroxidase family. EfeB subfamily. In terms of assembly, homodimer. Part of a ferrous iron transporter composed of EfeU, EfeO and EfeB. Requires heme b as cofactor. Post-translationally, predicted to be exported by the Tat system. The position of the signal peptide cleavage has not been experimentally proven.

The protein resides in the periplasm. It carries out the reaction heme b + 2 H(+) = protoporphyrin IX + Fe(2+). Involved in the recovery of exogenous heme iron. Extracts iron from heme while preserving the protoporphyrin ring intact. The chain is Deferrochelatase (efeB) from Yersinia pseudotuberculosis serotype I (strain IP32953).